We begin with the raw amino-acid sequence, 312 residues long: Pre-mRNA-splicing factor 38A (312 aa).

The interval 1 to 179 (MANRTVKDAH…VLEEAEQLEP (179 aa)) is N-terminal protein interaction domain. Phosphoserine occurs at positions 11, 193, 194, 209, and 226. Residues 170–204 (VLEEAEQLEPRVSALEEDMDDVESSEEEEEEDEKL) are a coiled coil. Residues 181-312 (VSALEEDMDD…SHKKSRRGNE (132 aa)) are disordered. The segment covering 184–202 (LEEDMDDVESSEEEEEEDE) has biased composition (acidic residues). Over residues 203–224 (KLERVPSPDHRRRSYRDLDKPR) the composition is skewed to basic and acidic residues. Composition is skewed to basic residues over residues 225–294 (RSPA…RSHS) and 301–312 (KKSHKKSRRGNE).

This sequence belongs to the PRP38 family. In terms of assembly, component of the spliceosome B complex. Interacts (via N-terminal interaction domain) with ZMAT2 and MFAP1.

The protein localises to the nucleus. In terms of biological role, involved in pre-mRNA splicing as a component of the spliceosome. The polypeptide is Pre-mRNA-splicing factor 38A (Prpf38a) (Mus musculus (Mouse)).